The following is an 80-amino-acid chain: Phage shock protein G (80 aa).

The next 2 membrane-spanning stretches (helical) occupy residues 5–25 (LFVI…LGII) and 41–61 (LALM…VWVI).

It localises to the cell inner membrane. In terms of biological role, effector of the phage shock response. The protein is Phage shock protein G (pspG) of Escherichia coli (strain K12).